The following is a 157-amino-acid chain: Protein FAM219A (157 aa).

Met1 carries the N-acetylmethionine modification. The disordered stretch occupies residues 1–103; sequence MMEEIDRFQD…SRYSSSGYSS (103 aa). Residues 17–33 show a composition bias toward basic and acidic residues; the sequence is SDRDCDAREEKQRELAR. Residues 38–52 show a composition bias toward polar residues; sequence KNGSMGSPVNQQPKK. Phosphoserine is present on residues Ser44 and Ser74. A Phosphothreonine modification is found at Thr85. Phosphoserine occurs at positions 87 and 94. The span at 94 to 103 shows a compositional bias: low complexity; it reads SRYSSSGYSS.

The protein belongs to the FAM219 family.

The protein is Protein FAM219A (Fam219a) of Mus musculus (Mouse).